A 145-amino-acid polypeptide reads, in one-letter code: Arginine repressor (145 aa).

The protein belongs to the ArgR family.

It is found in the cytoplasm. It functions in the pathway amino-acid biosynthesis; L-arginine biosynthesis [regulation]. In terms of biological role, regulates arginine biosynthesis genes. The protein is Arginine repressor of Streptococcus mutans serotype c (strain ATCC 700610 / UA159).